The sequence spans 746 residues: Hyperosmolality-gated Ca2+ permeable channel 2.1 (746 aa).

The next 10 membrane-spanning stretches (helical) occupy residues 3-23, 90-110, 144-164, 357-377, 405-425, 445-465, 492-512, 560-580, 601-621, and 623-643; these read ISAL…LLSL, MVIF…AFVL, LWVH…LLYF, IATL…VTFI, VITG…VPPL, ACIK…ILSG, AGFF…CEIM, VIAP…YLIY, IFHN…LGFF, and LKLS…TLLF. Residues 692-702 are compositionally biased toward polar residues; it reads LHSQKSSSKAE. Residues 692 to 723 form a disordered region; that stretch reads LHSQKSSSKAECSNPFKKQELPDPEKLKPEEG. Residues 708–723 show a composition bias toward basic and acidic residues; that stretch reads KKQELPDPEKLKPEEG.

It belongs to the CSC1 (TC 1.A.17) family.

Its subcellular location is the membrane. Acts as an osmosensitive calcium-permeable cation channel. In Arabidopsis thaliana (Mouse-ear cress), this protein is Hyperosmolality-gated Ca2+ permeable channel 2.1.